The primary structure comprises 456 residues: Argininosuccinate lyase (456 aa).

Belongs to the lyase 1 family. Argininosuccinate lyase subfamily.

It is found in the cytoplasm. The catalysed reaction is 2-(N(omega)-L-arginino)succinate = fumarate + L-arginine. It functions in the pathway amino-acid biosynthesis; L-arginine biosynthesis; L-arginine from L-ornithine and carbamoyl phosphate: step 3/3. The polypeptide is Argininosuccinate lyase (Shewanella woodyi (strain ATCC 51908 / MS32)).